The primary structure comprises 478 residues: Lysine histidine transporter-like 7 (478 aa).

Residues 1-63 (MSIALGNLFD…ITESRKGNVY (63 aa)) lie on the Cytoplasmic side of the membrane. Residues 15 to 45 (ESGGSPLFMSPAPSTDPQPISGEKNGGDGGR) are disordered. Residues 64–86 (TATFHLLCSGIGLQVILLPAAFA) traverse the membrane as a helical segment. Topologically, residues 87–89 (ALG) are extracellular. A helical membrane pass occupies residues 90-112 (WVWGTIILTVGFVWKLYTTWLLV). Residues 113–140 (QLHEAVPGIRISRYVRLAIASFGVKLGK) are Cytoplasmic-facing. The helical transmembrane segment at 141 to 161 (LLGIFPVMYLSGGACTILVIT) threads the bilayer. Residues 162 to 177 (GGKSIQQLLQIMSDDN) are Extracellular-facing. Residues 178–198 (TAPLTSVQCFLVFSCIAMIMS) traverse the membrane as a helical segment. At 199-205 (QFPNLNS) the chain is on the cytoplasmic side. A helical transmembrane segment spans residues 206–226 (LFGVSLIGAFMGIAYCTVIWI). Residues 227-241 (LPVASDSQRTQVSVS) are Extracellular-facing. A helical transmembrane segment spans residues 242 to 262 (YATMDKSFVHIFNAIGLIALV). The Cytoplasmic segment spans residues 263 to 291 (YRGNNLVLEIQGTLPSDSKNPSCKTMWRA). The helical transmembrane segment at 292–312 (VMISHALVAICMFPLTFAVYW) threads the bilayer. The Extracellular segment spans residues 313–340 (AYGDKIPATGGPVGNYLKLYTQEHSKRA). Residues 341–361 (ACFIHLTFIFSCLCSYPINLM) form a helical membrane-spanning segment. At 362–379 (PACDNIEMVYITKKKKPA) the chain is on the cytoplasmic side. The helical transmembrane segment at 380-402 (SIIVRMMLRVFLSLVCFTIAVGF) threads the bilayer. Residues 403–406 (PFLP) lie on the Extracellular side of the membrane. The helical transmembrane segment at 407 to 429 (YLAVLIGAIALLVTFTYPCFMWI) threads the bilayer. At 430-439 (SIKKPQRKSP) the chain is on the cytoplasmic side. The chain crosses the membrane as a helical span at residues 440-460 (MWLFNVLVGCLGASLSVLLLV). The Extracellular portion of the chain corresponds to 461-478 (ASAMRLAQKGLHANFFRP).

The protein belongs to the amino acid/polyamine transporter 2 family. Amino acid/auxin permease (AAAP) (TC 2.A.18.2) subfamily.

Its subcellular location is the cell membrane. Its function is as follows. Amino acid transporter. The sequence is that of Lysine histidine transporter-like 7 from Arabidopsis thaliana (Mouse-ear cress).